A 757-amino-acid polypeptide reads, in one-letter code: 5-methyltetrahydropteroyltriglutamate--homocysteine methyltransferase (757 aa).

5-methyltetrahydropteroyltri-L-glutamate is bound by residues 17 to 20 (RELK) and lysine 117. L-homocysteine is bound by residues 434-436 (IGS) and glutamate 487. L-methionine-binding positions include 434-436 (IGS) and glutamate 487. Residues 518–519 (RC) and tryptophan 564 contribute to the 5-methyltetrahydropteroyltri-L-glutamate site. Aspartate 602 lines the L-homocysteine pocket. Position 602 (aspartate 602) interacts with L-methionine. Glutamate 608 serves as a coordination point for 5-methyltetrahydropteroyltri-L-glutamate. The Zn(2+) site is built by histidine 644, cysteine 646, and glutamate 668. Residue histidine 697 is the Proton donor of the active site. Residue cysteine 729 participates in Zn(2+) binding.

This sequence belongs to the vitamin-B12 independent methionine synthase family. The cofactor is Zn(2+).

The catalysed reaction is 5-methyltetrahydropteroyltri-L-glutamate + L-homocysteine = tetrahydropteroyltri-L-glutamate + L-methionine. The protein operates within amino-acid biosynthesis; L-methionine biosynthesis via de novo pathway; L-methionine from L-homocysteine (MetE route): step 1/1. Functionally, catalyzes the transfer of a methyl group from 5-methyltetrahydrofolate to homocysteine resulting in methionine formation. This is 5-methyltetrahydropteroyltriglutamate--homocysteine methyltransferase from Proteus mirabilis (strain HI4320).